We begin with the raw amino-acid sequence, 20 residues long: Thylakoid lumenal 14.7 kDa protein (20 aa).

The tract at residues 1–20 is disordered; that stretch reads KTGVNKPELLPKEETTVIDV. Residues 9-20 show a composition bias toward basic and acidic residues; that stretch reads LLPKEETTVIDV.

It localises to the plastid. It is found in the chloroplast thylakoid lumen. This chain is Thylakoid lumenal 14.7 kDa protein, found in Spinacia oleracea (Spinach).